Here is a 141-residue protein sequence, read N- to C-terminus: MLMPKRTKYRKQQKGRNRGKAYRGSTLAFGTYGLKAVELGRINSRQIEAGRVALSRTMKRTGKIWIRVFPDKPLTAKPVGVRMGKGKGSVEEWVMNIKPGRIIFEITGVNNETAVRALTLAAAKLPFKTKIVSMESENELY.

The segment at 1-20 (MLMPKRTKYRKQQKGRNRGK) is disordered.

The protein belongs to the universal ribosomal protein uL16 family. As to quaternary structure, part of the 50S ribosomal subunit.

In terms of biological role, binds 23S rRNA and is also seen to make contacts with the A and possibly P site tRNAs. The chain is Large ribosomal subunit protein uL16 from Nautilia profundicola (strain ATCC BAA-1463 / DSM 18972 / AmH).